A 204-amino-acid polypeptide reads, in one-letter code: phospholipase A2 inhibitor and Ly6/PLAUR domain-containing protein (204 aa).

Residues 1 to 26 (MRLSRRPETFLLAFVLLCTLLGLGCP) form the signal peptide. The region spanning 27–117 (LHCEICTAAG…NSAFLSVPLT (91 aa)) is the UPAR/Ly6 domain. Disulfide bonds link Cys29–Cys53, Cys32–Cys39, Cys46–Cys74, Cys80–Cys101, Cys102–Cys107, Cys126–Cys151, and Cys144–Cys172.

This sequence belongs to the CNF-like-inhibitor family.

The protein localises to the secreted. The chain is phospholipase A2 inhibitor and Ly6/PLAUR domain-containing protein (PINLYP) from Homo sapiens (Human).